The sequence spans 406 residues: Proteasome-activating nucleotidase 1 (406 aa).

Positions 13 to 72 form a coiled coil; that stretch reads YDKDSASQQEKITALQERLEVLETQNEEMRDKLLDTNAENNKYQQKLERLTHENKKLKQS. Residues 194 to 199 and His-333 each bind ATP; that span reads GTGKTM. Residues 404-406 form a docks into pockets in the proteasome alpha-ring to cause gate opening region; the sequence is AFA.

Belongs to the AAA ATPase family. As to quaternary structure, homododecamer, in a proposed two stacked hexameric ring configuration, but may also form homohexamer. The hexameric complex has likely a two-ring architecture resembling a top hat that caps the 20S proteasome core at one or both ends. Upon ATP-binding, the C-terminus of PAN probably interacts with the alpha-rings of the proteasome core by binding to the intersubunit pockets. Interacts with SAMP1-MoaE conjugate in vitro, but does not bind to SAMP1 or MoaE alone. Interacts with NcsA.

It is found in the cytoplasm. Its activity is regulated as follows. ATPase activity is inhibited by EDTA in vitro. Functionally, ATPase which is responsible for recognizing, binding, unfolding and translocation of substrate proteins into the archaeal 20S proteasome core particle. Is essential for opening the gate of the 20S proteasome via an interaction with its C-terminus, thereby allowing substrate entry and access to the site of proteolysis. Thus, the C-terminus of the proteasomal ATPase functions like a 'key in a lock' to induce gate opening and therefore regulate proteolysis. Unfolding activity requires energy from ATP hydrolysis, whereas ATP binding alone promotes ATPase-20S proteasome association which triggers gate opening, and supports translocation of unfolded substrates. Is also able to cleave other nucleoside triphosphates including GTP and TTP, but the rate of hydrolysis is 4- to 5-fold slower than for ATP. The protein is Proteasome-activating nucleotidase 1 of Haloferax volcanii (strain ATCC 29605 / DSM 3757 / JCM 8879 / NBRC 14742 / NCIMB 2012 / VKM B-1768 / DS2) (Halobacterium volcanii).